The following is a 128-amino-acid chain: Glycine cleavage system H protein (128 aa).

The Lipoyl-binding domain maps to 23-105 (IGIVGITWFA…YGEGWILKLE (83 aa)). N6-lipoyllysine is present on K64.

It belongs to the GcvH family. In terms of assembly, the glycine cleavage system is composed of four proteins: P, T, L and H. The cofactor is (R)-lipoate.

The glycine cleavage system catalyzes the degradation of glycine. The H protein shuttles the methylamine group of glycine from the P protein to the T protein. This is Glycine cleavage system H protein from Symbiobacterium thermophilum (strain DSM 24528 / JCM 14929 / IAM 14863 / T).